The following is a 121-amino-acid chain: Small ribosomal subunit protein uS13 (121 aa).

Residues 94-121 (GLPVRGQNTKNNARTRKGPRRTVANKKK) form a disordered region. The segment covering 106-121 (ARTRKGPRRTVANKKK) has biased composition (basic residues).

The protein belongs to the universal ribosomal protein uS13 family. As to quaternary structure, part of the 30S ribosomal subunit. Forms a loose heterodimer with protein S19. Forms two bridges to the 50S subunit in the 70S ribosome.

Located at the top of the head of the 30S subunit, it contacts several helices of the 16S rRNA. In the 70S ribosome it contacts the 23S rRNA (bridge B1a) and protein L5 of the 50S subunit (bridge B1b), connecting the 2 subunits; these bridges are implicated in subunit movement. Contacts the tRNAs in the A and P-sites. The chain is Small ribosomal subunit protein uS13 from Geobacillus kaustophilus (strain HTA426).